The sequence spans 390 residues: Calcium-binding and spermatid-specific protein 1 (390 aa).

3 disordered regions span residues 1 to 23, 82 to 109, and 146 to 225; these read MAED…TPTE, ASLK…KESI, and TIDA…TIPD. Acidic residues predominate over residues 162-174; it reads ETQEDSSANDEDT. The span at 184-193 shows a compositional bias: low complexity; sequence TDVSSSTSSD. Residues serine 251 and serine 267 each carry the phosphoserine modification. Threonine 280 carries the phosphothreonine; by CK2 modification. Serine 312 carries the post-translational modification Phosphoserine. Over residues 330–344 the composition is skewed to basic and acidic residues; the sequence is EPHVDTKNSPEKDAA. The segment at 330 to 390 is disordered; it reads EPHVDTKNSP…LKEEPDELMM (61 aa). A phosphoserine mark is found at serine 346, serine 356, serine 371, and serine 375. Polar residues predominate over residues 346 to 364; sequence SVTNVTEEFPSVTSVVEQS.

As to expression, expressed in seminiferous tubules of the testis in step 10 spermatids (stage X), subsequently increasing to reach maximal levels of step 18 elongated spermatids (stage VI) (at protein level). Strongly expressed in testis. Weakly expressed in olfactory epithelium. Expressed in spermatids of seminiferous tubules at steps 4-14 (stages IV to XIV of the seminiferous epithelium classification).

The protein localises to the cytoplasm. It localises to the mitochondrion inner membrane. It is found in the cell projection. Its subcellular location is the cilium. The protein resides in the flagellum. The protein localises to the cytoplasmic vesicle. It localises to the secretory vesicle. It is found in the acrosome. In terms of biological role, calcium-binding protein. Essential for maintaining the structural integrity of the sperm flagella. In Rattus norvegicus (Rat), this protein is Calcium-binding and spermatid-specific protein 1 (Cabs1).